Consider the following 524-residue polypeptide: Rho guanine nucleotide exchange factor 3 (524 aa).

The segment at Ser-75 to Arg-98 is disordered. The 183-residue stretch at Ile-121–Ile-303 folds into the DH domain. One can recognise a PH domain in the interval Ala-290 to Lys-448.

It is found in the cytoplasm. Its function is as follows. Acts as a guanine nucleotide exchange factor (GEF) for RhoA and RhoB GTPases. This chain is Rho guanine nucleotide exchange factor 3 (Arhgef3), found in Gallus gallus (Chicken).